The primary structure comprises 394 residues: uncharacterized protein (394 aa).

This sequence belongs to the mycobacterial PPE family.

This is an uncharacterized protein from Mycobacterium tuberculosis (strain CDC 1551 / Oshkosh).